An 867-amino-acid polypeptide reads, in one-letter code: Bifunctional cis-abienol synthase, chloroplastic (867 aa).

The transit peptide at 1–49 directs the protein to the chloroplast; the sequence is MALPVYSLKSHIPITTIASAKMNYTPNKGMITANGRSRRIRLSPNKIVA. Residue Lys-270 participates in substrate binding. The short motif at 403-406 is the DXDD motif element; sequence DIDD. Residue Lys-490 participates in substrate binding. Mg(2+) contacts are provided by Asp-622, Asp-626, Asn-763, Asp-764, Thr-767, and Glu-771. The DDXXD motif motif lies at 622–626; that stretch reads DDLYD.

The protein belongs to the terpene synthase family. Tpsd subfamily. Mg(2+) serves as cofactor.

It localises to the plastid. The protein localises to the chloroplast. The catalysed reaction is 8-hydroxycopalyl diphosphate = cis-abienol + diphosphate. It catalyses the reaction (2E,6E,10E)-geranylgeranyl diphosphate + H2O = 8-hydroxycopalyl diphosphate. The protein operates within terpene metabolism; oleoresin biosynthesis. Involved in the biosynthesis of cis-abienol, a labdane diterpene that can be used as synthesis precursor of ambergris substitution fragance products. Bifunctional class I/II enzyme in which both the bicyclization and water capture occur in the class II active site, resulting in an intermediary labda-13-en-8-ol diphosphate, which undergoes cleavage of the diphosphate group and final deprotonation at the class I active site. No activity with copalyl diphosphate as substrate. The polypeptide is Bifunctional cis-abienol synthase, chloroplastic (CAS) (Abies balsamea (Balsam fir)).